The following is a 393-amino-acid chain: 8-amino-7-oxononanoate synthase (393 aa).

Arginine 18 contributes to the substrate binding site. 105–106 (GY) contributes to the pyridoxal 5'-phosphate binding site. Histidine 130 lines the substrate pocket. The pyridoxal 5'-phosphate site is built by serine 178, histidine 206, and threonine 234. At lysine 237 the chain carries N6-(pyridoxal phosphate)lysine. A substrate-binding site is contributed by threonine 353.

This sequence belongs to the class-II pyridoxal-phosphate-dependent aminotransferase family. BioF subfamily. As to quaternary structure, homodimer. The cofactor is pyridoxal 5'-phosphate.

The enzyme catalyses 6-carboxyhexanoyl-[ACP] + L-alanine + H(+) = (8S)-8-amino-7-oxononanoate + holo-[ACP] + CO2. It participates in cofactor biosynthesis; biotin biosynthesis. Catalyzes the decarboxylative condensation of pimeloyl-[acyl-carrier protein] and L-alanine to produce 8-amino-7-oxononanoate (AON), [acyl-carrier protein], and carbon dioxide. The sequence is that of 8-amino-7-oxononanoate synthase from Geotalea daltonii (strain DSM 22248 / JCM 15807 / FRC-32) (Geobacter daltonii).